The chain runs to 282 residues: Protein-export membrane protein SecF (282 aa).

6 consecutive transmembrane segments (helical) span residues 16-36 (MVAL…FNTV), 126-146 (QAIW…FVAF), 148-168 (IFIP…ITAA), 169-189 (FMDV…LMLI), 221-241 (GIIM…VFSL), and 253-273 (VLII…AGLL).

It belongs to the SecD/SecF family. SecF subfamily. Part of the protein translocation apparatus. Forms a complex with SecD.

It is found in the cell membrane. In terms of biological role, involved in protein export. This Methanolacinia petrolearia (strain DSM 11571 / OCM 486 / SEBR 4847) (Methanoplanus petrolearius) protein is Protein-export membrane protein SecF.